Reading from the N-terminus, the 353-residue chain is UDP-N-acetylenolpyruvoylglucosamine reductase (353 aa).

The region spanning 31-201 is the FAD-binding PCMH-type domain; the sequence is LASHAPAFVA…GSVRFALPRP (171 aa). R177 is an active-site residue. Catalysis depends on S250, which acts as the Proton donor. Residue E346 is part of the active site.

This sequence belongs to the MurB family. The cofactor is FAD.

Its subcellular location is the cytoplasm. It carries out the reaction UDP-N-acetyl-alpha-D-muramate + NADP(+) = UDP-N-acetyl-3-O-(1-carboxyvinyl)-alpha-D-glucosamine + NADPH + H(+). It functions in the pathway cell wall biogenesis; peptidoglycan biosynthesis. Cell wall formation. In Bordetella parapertussis (strain 12822 / ATCC BAA-587 / NCTC 13253), this protein is UDP-N-acetylenolpyruvoylglucosamine reductase.